Here is a 443-residue protein sequence, read N- to C-terminus: Thymidine phosphorylase (443 aa).

The protein belongs to the thymidine/pyrimidine-nucleoside phosphorylase family. In terms of assembly, homodimer.

The catalysed reaction is thymidine + phosphate = 2-deoxy-alpha-D-ribose 1-phosphate + thymine. The protein operates within pyrimidine metabolism; dTMP biosynthesis via salvage pathway; dTMP from thymine: step 1/2. In terms of biological role, the enzymes which catalyze the reversible phosphorolysis of pyrimidine nucleosides are involved in the degradation of these compounds and in their utilization as carbon and energy sources, or in the rescue of pyrimidine bases for nucleotide synthesis. This Shewanella sediminis (strain HAW-EB3) protein is Thymidine phosphorylase.